A 704-amino-acid polypeptide reads, in one-letter code: Ankyrin repeat and LEM domain-containing protein 1 homolog (704 aa).

Residues 1-29 (MPPNGAITTTPRSRMPPTTPSSGKSRPKK) are disordered. Residues 8 to 22 (TTTPRSRMPPTTPSS) are compositionally biased toward low complexity. 2 ANK repeats span residues 28–59 (KKET…NVNA) and 63–93 (DGAT…PMSA). Disordered regions lie at residues 247-293 (NEDV…SQET), 314-358 (NAGL…ANTT), and 381-421 (SKSA…TTVD). Residues 276–288 (RKQRTPVNHHKRS) show a composition bias toward basic residues. Low complexity-rich tracts occupy residues 329-346 (EPAI…TPKT) and 384-405 (AKSS…SFSS). Residues 425 to 470 (IRKIRRLREGELKSELKKFGISPAGPLDARTRRLYEKKLLIERRKI) form the LEM domain. One can recognise a GIY-YIG domain in the interval 525–635 (YNAFCYLIMD…AVKLKNLRNK (111 aa)).

Phosphorylated. Phosphorylated during telophase when localized at the midbody.

It localises to the cytoplasm. The protein resides in the nucleus. The protein localises to the chromosome. It is found in the midbody. Its subcellular location is the cytoskeleton. It localises to the spindle. With respect to regulation, inhibited by EDTA. Endonuclease which, in association with baf-1, plays an essential role during embryogenesis in the DNA repair response following DNA damage probably by ensuring proper chromosome segregation. Also required during postembryonic cell divisions after DNA damage caused by ionizing radiation to ensure normal cell proliferation. Resolves chromatin bridges in late mitosis that result from incomplete DNA replication, defective chromosome condensation or unresolved recombination intermediates. Together with brc-1, contributes to genome integrity by resolving mitotic chromatin bridges that result from incomplete processing of DNA breaks. In parallel to the slx-1/mus-81 pathway, acts in processing early recombination intermediates in meiotic prophase I to prevent illegitimate recombination. Also involved in processing remaining, erroneous recombination intermediates that persist into the second meiotic division. The polypeptide is Ankyrin repeat and LEM domain-containing protein 1 homolog (Caenorhabditis elegans).